A 519-amino-acid chain; its full sequence is Acetylcholine receptor subunit gamma (519 aa).

A signal peptide spans 1–22 (MHGGQGPQLLLLLLATCLGAQS). At 23–240 (RNQEERLLAD…VVFYLLIQRK (218 aa)) the chain is on the extracellular side. Asn-52 and Asn-163 each carry an N-linked (GlcNAc...) asparagine glycan. An intrachain disulfide couples Cys-150 to Cys-164. The next 3 helical transmembrane spans lie at 241-265 (PLFY…IYFL), 274-292 (CTVA…FLVA), and 308-329 (YLTF…VLNV). Residues 330–476 (SLRSPHTHSM…WLLVGRVLDR (147 aa)) are Cytoplasmic-facing. A helical membrane pass occupies residues 477-497 (VCFLAMLSLFICGTAGIFLMA).

It belongs to the ligand-gated ion channel (TC 1.A.9) family. Acetylcholine receptor (TC 1.A.9.1) subfamily. Gamma/CHRNG sub-subfamily. Pentamer of two alpha chains, and one each of the beta, delta, and gamma (in immature muscle) or epsilon (in mature muscle) chains.

It is found in the postsynaptic cell membrane. The protein localises to the cell membrane. The catalysed reaction is K(+)(in) = K(+)(out). It catalyses the reaction Na(+)(in) = Na(+)(out). After binding acetylcholine, the AChR responds by an extensive change in conformation that affects all subunits and leads to opening of an ion-conducting channel across the plasma membrane. The protein is Acetylcholine receptor subunit gamma (Chrng) of Rattus norvegicus (Rat).